The chain runs to 333 residues: HTH-type transcriptional regulator CbbR (333 aa).

One can recognise an HTH lysR-type domain in the interval 5-62; sequence WTLRQLRLVALAAASGSYAKAAQDMGLSPPAVTAQMKALEEDIGVPMFERVDGRLRPT. A DNA-binding region (H-T-H motif) is located at residues 22–41; sequence YAKAAQDMGLSPPAVTAQMK.

The protein belongs to the LysR transcriptional regulatory family.

Functionally, transcriptional activator for the cbb operon (cbbLSXFP) for RuBisCO and other Calvin cycle genes. Binds specifically to two binding sites in the cbbR-cbbL intergenic region. The polypeptide is HTH-type transcriptional regulator CbbR (cbbR) (Xanthobacter flavus).